The sequence spans 157 residues: Small ribosomal subunit protein uS7 (157 aa).

It belongs to the universal ribosomal protein uS7 family. Part of the 30S ribosomal subunit. Contacts proteins S9 and S11.

In terms of biological role, one of the primary rRNA binding proteins, it binds directly to 16S rRNA where it nucleates assembly of the head domain of the 30S subunit. Is located at the subunit interface close to the decoding center, probably blocks exit of the E-site tRNA. The sequence is that of Small ribosomal subunit protein uS7 from Chloroflexus aurantiacus (strain ATCC 29366 / DSM 635 / J-10-fl).